The sequence spans 342 residues: Heat-inducible transcription repressor HrcA (342 aa).

The protein belongs to the HrcA family.

Negative regulator of class I heat shock genes (grpE-dnaK-dnaJ and groELS operons). Prevents heat-shock induction of these operons. The polypeptide is Heat-inducible transcription repressor HrcA (Onion yellows phytoplasma (strain OY-M)).